We begin with the raw amino-acid sequence, 602 residues long: MFRQFRSEVADALGDALASLDLPTDDLGIERPPDDMDATLASSVAFRLAGEVGDAPPNVAATVADAVDVDGYDYLAAVDTAGPYVNFHPGERYFVDTLDASAVDSGYGALPDRDTSVVVEHTSANPTGPVHVGRARNPIVGDAVANLLEYAGYDVDRHYYVNDAGRQMAVFTWAYERFDESDLAGEPARARAEYDLVRYYRKGNAYLEEADPEAVEAAEEEIAAILQGLEAGDEETYERVGEVVDTVLGGMKECLARLPAEFDEFVKETRFMRDGSTDDIAARLKETDHAVYEEDAWQLELDDWGIDKNLVFLRSDDTSLYTTRDLAHHEWKFDNYDRAVTVLGEDHKLQADQLDATLELLGNDIDRLGHVIYSYVNLPDGKMSTRRGTGVMLDDLLDEAIDRAREAVETRMDDRIRDDDLTEEDVERIAHEVGIGAVRYDIVSKQPAKAITFEWEDALDFEGQSAPFVQYVHARCCGILDEAADAGIEVPGVTADSEGVVDVGALDVDATVFETDAARDLLREVARFPAAIESAADDLEPHTIATFTREFADAYNAFYRECPVVTSDDEELRAARVALVAAAKHTMANALDVLGVEAPESM.

The short motif at 124-134 (ANPTGPVHVGR) is the 'HIGH' region element.

The protein belongs to the class-I aminoacyl-tRNA synthetase family.

It is found in the cytoplasm. The enzyme catalyses tRNA(Arg) + L-arginine + ATP = L-arginyl-tRNA(Arg) + AMP + diphosphate. The chain is Arginine--tRNA ligase from Halorubrum lacusprofundi (strain ATCC 49239 / DSM 5036 / JCM 8891 / ACAM 34).